We begin with the raw amino-acid sequence, 510 residues long: GPI mannosyltransferase 4 (510 aa).

The next 3 helical transmembrane spans lie at 7–27 (LILA…SYIH), 62–82 (FVPL…LWKG), and 89–109 (AYWF…DMAL). The N-linked (GlcNAc...) asparagine glycan is linked to Asn-142. Residues 179-199 (LGLLIVIGTWNRVTFPLWLIV) form a helical membrane-spanning segment. The N-linked (GlcNAc...) asparagine glycan is linked to Asn-212. Helical transmembrane passes span 213-233 (ISSL…VIHV), 268-288 (LTHL…LLRT), and 339-359 (FTSA…FLMG).

The protein belongs to the glycosyltransferase 22 family. PIGZ subfamily.

It localises to the endoplasmic reticulum membrane. Its pathway is glycolipid biosynthesis; glycosylphosphatidylinositol-anchor biosynthesis. Alpha-1,2-mannosyltransferase involved in glycosylphosphatidylinositol-anchor biosynthesis. Transfers a fourth mannose to trimannosyl-GPIs during GPI precursor assembly. The presence of a fourth mannose in GPI is essential in fungi. This Yarrowia lipolytica (strain CLIB 122 / E 150) (Yeast) protein is GPI mannosyltransferase 4 (SMP3).